The following is a 269-amino-acid chain: Aquaporin-7 (269 aa).

The Cytoplasmic portion of the chain corresponds to Met1 to Glu20. At Ser4 the chain carries Phosphoserine. The chain crosses the membrane as a helical span at residues Phe21 to Ser38. Topologically, residues Val39 to Tyr51 are extracellular. The helical transmembrane segment at Leu52–Ala69 threads the bilayer. Residues Gly70–Ser73 lie on the Cytoplasmic side of the membrane. Positions Gly74 to Ala87 form an intramembrane region, discontinuously helical. An NPA 1 motif is present at residues Asn78–Ala80. At Leu88–Lys95 the chain is on the cytoplasmic side. Residues Phe96–Leu116 traverse the membrane as a helical segment. At Ile117 to Thr151 the chain is on the extracellular side. The helical transmembrane segment at Leu152–Ala172 threads the bilayer. Residues Ile173 to Gly184 lie on the Cytoplasmic side of the membrane. A helical membrane pass occupies residues Thr185 to Leu201. Residues Gly202–Thr205 are Extracellular-facing. An intramembrane region (discontinuously helical) is located at residues Gly206 to Phe219. The NPA 2 motif lies at Asn210–Ser212. At Phe220–Trp237 the chain is on the extracellular side. Residues Trp238–Leu259 form a helical membrane-spanning segment. Residues Ile260–Ser269 lie on the Cytoplasmic side of the membrane.

Belongs to the MIP/aquaporin (TC 1.A.8) family. As to quaternary structure, homotetramer; each monomer provides an independent glycerol/water pore. Two homotetramers on opposing membranes can dimerize, forming a cell-cell junction. Interacts with PLIN1. Post-translationally, phosphorylation by PKA could prevent the interaction with PLIN1. As to expression, detected in heart, kidney and testis.

The protein resides in the cell membrane. Its subcellular location is the cytoplasmic vesicle membrane. The protein localises to the lipid droplet. It carries out the reaction glycerol(in) = glycerol(out). It catalyses the reaction H2O(in) = H2O(out). The catalysed reaction is urea(in) = urea(out). With respect to regulation, glycerol transport is regulated by pH, with the porin being permeable to glycerol at pH 7.4 but not at pH 5.5. Water permeability, however, is not influenced by pH. Not inhibited by mercury ions. In terms of biological role, aquaglyceroporins form homotetrameric transmembrane channels, with each monomer independently mediating glycerol and water transport across the plasma membrane along their osmotic gradient. Could also be permeable to urea. Mediates the efflux of glycerol, formed upon triglyceride hydrolysis, to avoid its accumulation in adipocytes and to make it available to other tissues. In the kidney, mediates the reabsorption of glycerol, preventing its loss in urine, again participating to energy homeostasis. In pancreatic beta cells, it also mediates the efflux of glycerol, regulating its intracellular levels. In Rattus norvegicus (Rat), this protein is Aquaporin-7.